The primary structure comprises 151 residues: Ubiquitin-conjugating enzyme E2 2 (151 aa).

One can recognise a UBC core domain in the interval 4–150 (AARRRLMRDF…VRETVEKSWE (147 aa)). The active-site Glycyl thioester intermediate is the Cys-88.

Belongs to the ubiquitin-conjugating enzyme family.

The protein localises to the cytoplasm. The protein resides in the nucleus. The catalysed reaction is S-ubiquitinyl-[E1 ubiquitin-activating enzyme]-L-cysteine + [E2 ubiquitin-conjugating enzyme]-L-cysteine = [E1 ubiquitin-activating enzyme]-L-cysteine + S-ubiquitinyl-[E2 ubiquitin-conjugating enzyme]-L-cysteine.. It participates in protein modification; protein ubiquitination. Catalyzes the covalent attachment of ubiquitin to other proteins. Plays a role in transcription regulation by catalyzing the monoubiquitination of histone H2B to form H2BK123ub1. H2BK123ub1 gives a specific tag for epigenetic transcriptional activation and is also a prerequisite for H3K4me and H3K79me formation. Also involved in postreplication repair of UV-damaged DNA, in N-end rule-dependent protein degradation and in sporulation. This Neurospora crassa (strain ATCC 24698 / 74-OR23-1A / CBS 708.71 / DSM 1257 / FGSC 987) protein is Ubiquitin-conjugating enzyme E2 2 (mus-8).